Consider the following 338-residue polypeptide: 4-hydroxy-3-methylbut-2-enyl diphosphate reductase (338 aa).

Residue cysteine 21 participates in [4Fe-4S] cluster binding. Positions 50 and 83 each coordinate (2E)-4-hydroxy-3-methylbut-2-enyl diphosphate. Positions 50 and 83 each coordinate dimethylallyl diphosphate. Positions 50 and 83 each coordinate isopentenyl diphosphate. Cysteine 105 is a [4Fe-4S] cluster binding site. Position 133 (histidine 133) interacts with (2E)-4-hydroxy-3-methylbut-2-enyl diphosphate. Position 133 (histidine 133) interacts with dimethylallyl diphosphate. Residue histidine 133 participates in isopentenyl diphosphate binding. Residue glutamate 135 is the Proton donor of the active site. Threonine 173 is a binding site for (2E)-4-hydroxy-3-methylbut-2-enyl diphosphate. Cysteine 203 serves as a coordination point for [4Fe-4S] cluster. (2E)-4-hydroxy-3-methylbut-2-enyl diphosphate-binding residues include serine 231, serine 232, asparagine 233, and serine 276. 4 residues coordinate dimethylallyl diphosphate: serine 231, serine 232, asparagine 233, and serine 276. Isopentenyl diphosphate contacts are provided by serine 231, serine 232, asparagine 233, and serine 276.

This sequence belongs to the IspH family. Requires [4Fe-4S] cluster as cofactor.

It catalyses the reaction isopentenyl diphosphate + 2 oxidized [2Fe-2S]-[ferredoxin] + H2O = (2E)-4-hydroxy-3-methylbut-2-enyl diphosphate + 2 reduced [2Fe-2S]-[ferredoxin] + 2 H(+). The catalysed reaction is dimethylallyl diphosphate + 2 oxidized [2Fe-2S]-[ferredoxin] + H2O = (2E)-4-hydroxy-3-methylbut-2-enyl diphosphate + 2 reduced [2Fe-2S]-[ferredoxin] + 2 H(+). Its pathway is isoprenoid biosynthesis; dimethylallyl diphosphate biosynthesis; dimethylallyl diphosphate from (2E)-4-hydroxy-3-methylbutenyl diphosphate: step 1/1. It participates in isoprenoid biosynthesis; isopentenyl diphosphate biosynthesis via DXP pathway; isopentenyl diphosphate from 1-deoxy-D-xylulose 5-phosphate: step 6/6. Functionally, catalyzes the conversion of 1-hydroxy-2-methyl-2-(E)-butenyl 4-diphosphate (HMBPP) into a mixture of isopentenyl diphosphate (IPP) and dimethylallyl diphosphate (DMAPP). Acts in the terminal step of the DOXP/MEP pathway for isoprenoid precursor biosynthesis. The polypeptide is 4-hydroxy-3-methylbut-2-enyl diphosphate reductase (Streptomyces avermitilis (strain ATCC 31267 / DSM 46492 / JCM 5070 / NBRC 14893 / NCIMB 12804 / NRRL 8165 / MA-4680)).